Consider the following 400-residue polypeptide: Enoyl-[acyl-carrier-protein] reductase [NADH] (400 aa).

NAD(+) contacts are provided by residues 48-53, 74-75, 111-112, and 139-140; these read GSSSGY, FE, DA, and LA. Tyrosine 225 is a binding site for substrate. Tyrosine 235 (proton donor) is an active-site residue. Residues lysine 244 and 273-275 each bind NAD(+); that span reads VVT.

This sequence belongs to the TER reductase family. Monomer.

It catalyses the reaction a 2,3-saturated acyl-[ACP] + NAD(+) = a (2E)-enoyl-[ACP] + NADH + H(+). The protein operates within lipid metabolism; fatty acid biosynthesis. Its function is as follows. Involved in the final reduction of the elongation cycle of fatty acid synthesis (FAS II). Catalyzes the reduction of a carbon-carbon double bond in an enoyl moiety that is covalently linked to an acyl carrier protein (ACP). The sequence is that of Enoyl-[acyl-carrier-protein] reductase [NADH] from Aliivibrio fischeri (strain ATCC 700601 / ES114) (Vibrio fischeri).